Consider the following 215-residue polypeptide: Probable GTP-binding protein EngB (215 aa).

One can recognise an EngB-type G domain in the interval 30–204 (EGLEVAFAGR…QMVLAQWLGL (175 aa)). Residues 38 to 45 (GRSNAGKS), 64 to 68 (GRTQL), 82 to 85 (DLPG), 149 to 152 (TKAD), and 182 to 185 (LFSA) each bind GTP. Ser-45 and Thr-66 together coordinate Mg(2+).

The protein belongs to the TRAFAC class TrmE-Era-EngA-EngB-Septin-like GTPase superfamily. EngB GTPase family. Mg(2+) serves as cofactor.

In terms of biological role, necessary for normal cell division and for the maintenance of normal septation. This Pseudomonas aeruginosa (strain ATCC 15692 / DSM 22644 / CIP 104116 / JCM 14847 / LMG 12228 / 1C / PRS 101 / PAO1) protein is Probable GTP-binding protein EngB.